Here is a 216-residue protein sequence, read N- to C-terminus: ATP-dependent Clp protease proteolytic subunit (216 aa).

The active-site Nucleophile is the serine 101. Histidine 126 is a catalytic residue.

The protein belongs to the peptidase S14 family. In terms of assembly, component of the chloroplastic Clp protease core complex.

The protein localises to the plastid. Its subcellular location is the chloroplast stroma. The catalysed reaction is Hydrolysis of proteins to small peptides in the presence of ATP and magnesium. alpha-casein is the usual test substrate. In the absence of ATP, only oligopeptides shorter than five residues are hydrolyzed (such as succinyl-Leu-Tyr-|-NHMec, and Leu-Tyr-Leu-|-Tyr-Trp, in which cleavage of the -Tyr-|-Leu- and -Tyr-|-Trp bonds also occurs).. Functionally, cleaves peptides in various proteins in a process that requires ATP hydrolysis. Has a chymotrypsin-like activity. Plays a major role in the degradation of misfolded proteins. The chain is ATP-dependent Clp protease proteolytic subunit from Saccharum hybrid (Sugarcane).